We begin with the raw amino-acid sequence, 138 residues long: Large ribosomal subunit protein uL16 (138 aa).

It belongs to the universal ribosomal protein uL16 family. As to quaternary structure, part of the 50S ribosomal subunit.

Its function is as follows. Binds 23S rRNA and is also seen to make contacts with the A and possibly P site tRNAs. The polypeptide is Large ribosomal subunit protein uL16 (Rubrobacter xylanophilus (strain DSM 9941 / JCM 11954 / NBRC 16129 / PRD-1)).